Here is a 258-residue protein sequence, read N- to C-terminus: uncharacterized protein (258 aa).

A run of 6 helical transmembrane segments spans residues 21–41, 73–93, 119–139, 153–173, 182–202, and 229–249; these read LIWL…TIYY, LSQF…GSVA, WLIQ…LAYY, FAAS…AGLA, GAAA…VSLF, and FFGW…VFSV.

The protein resides in the cell membrane. This is an uncharacterized protein from Bacillus subtilis (strain 168).